A 397-amino-acid polypeptide reads, in one-letter code: Elongation factor Tu (397 aa).

Residues 10–207 form the tr-type G domain; the sequence is LPHVNVGTIG…TLDSYIPDPV (198 aa). The interval 19–26 is G1; that stretch reads GHVDHGKT. 19–26 contacts GTP; that stretch reads GHVDHGKT. Threonine 26 provides a ligand contact to Mg(2+). The interval 60–64 is G2; that stretch reads GITIN. Residues 81–84 are G3; that stretch reads DCPG. Residues 81–85 and 136–139 each bind GTP; these read DCPGH and NKAD. The tract at residues 136-139 is G4; that stretch reads NKAD. The G5 stretch occupies residues 174–176; the sequence is SAR.

Belongs to the TRAFAC class translation factor GTPase superfamily. Classic translation factor GTPase family. EF-Tu/EF-1A subfamily. Monomer.

It localises to the cytoplasm. It carries out the reaction GTP + H2O = GDP + phosphate + H(+). Its function is as follows. GTP hydrolase that promotes the GTP-dependent binding of aminoacyl-tRNA to the A-site of ribosomes during protein biosynthesis. This chain is Elongation factor Tu, found in Pseudomonas fluorescens (strain SBW25).